The chain runs to 95 residues: MHALIDLVKYPLITDKATRLLELNQYTFLTSRVATKTDIKNAIEFLFNVKVISINTCLLPLKRKRLGKFVGSKPRYKKAVVTLEKNNTINLFSEN.

It belongs to the universal ribosomal protein uL23 family. As to quaternary structure, part of the 50S ribosomal subunit.

It localises to the plastid. It is found in the chloroplast. Functionally, binds to 23S rRNA. The chain is Large ribosomal subunit protein uL23c (rpl23) from Guillardia theta (Cryptophyte).